The chain runs to 317 residues: tRNA pseudouridine synthase B (317 aa).

Catalysis depends on D47, which acts as the Nucleophile.

Belongs to the pseudouridine synthase TruB family. Type 1 subfamily.

The catalysed reaction is uridine(55) in tRNA = pseudouridine(55) in tRNA. In terms of biological role, responsible for synthesis of pseudouridine from uracil-55 in the psi GC loop of transfer RNAs. In Shewanella sp. (strain ANA-3), this protein is tRNA pseudouridine synthase B.